Here is a 282-residue protein sequence, read N- to C-terminus: sn-glycerol-3-phosphate transport system permease protein UgpE (282 aa).

The next 6 helical transmembrane spans lie at 14-34 (LILILGIIIVAFPIYYTFVAS), 86-106 (MAIAVGKIIISFMSAFAIVFF), 112-132 (MFFFWMIFITLMLPVEVRILP), 146-168 (YAGLTLPLMASATATFLFRQFFL), 201-221 (IAALFVILFIYGWTQYLWPLL), and 248-268 (WNYVMVTAILAIIPLILVVVL). In terms of domain architecture, ABC transmembrane type-1 spans 78–269 (LWNSFVVAMA…IPLILVVVLM (192 aa)).

The protein belongs to the binding-protein-dependent transport system permease family. The complex is composed of two ATP-binding proteins (UgpC), two transmembrane proteins (UgpA and UgpE) and a solute-binding protein (UgpB).

It localises to the cell inner membrane. Its function is as follows. Part of the ABC transporter complex UgpBAEC involved in sn-glycerol-3-phosphate (G3P) import. Probably responsible for the translocation of the substrate across the membrane. The chain is sn-glycerol-3-phosphate transport system permease protein UgpE (ugpE) from Brucella abortus (strain 2308).